Here is a 98-residue protein sequence, read N- to C-terminus: Large ribosomal subunit protein uL23 (98 aa).

Belongs to the universal ribosomal protein uL23 family. Part of the 50S ribosomal subunit. Contacts protein L29, and trigger factor when it is bound to the ribosome.

Functionally, one of the early assembly proteins it binds 23S rRNA. One of the proteins that surrounds the polypeptide exit tunnel on the outside of the ribosome. Forms the main docking site for trigger factor binding to the ribosome. The sequence is that of Large ribosomal subunit protein uL23 from Lactobacillus delbrueckii subsp. bulgaricus (strain ATCC 11842 / DSM 20081 / BCRC 10696 / JCM 1002 / NBRC 13953 / NCIMB 11778 / NCTC 12712 / WDCM 00102 / Lb 14).